A 984-amino-acid chain; its full sequence is Respiratory nitrate reductase subunit alpha (984 aa).

A disordered region spans residues 1 to 43 (MSRNDASQLDDGETTAESPPDDQANDAPEVGDPPGDPVDADSG). A compositionally biased stretch (acidic residues) spans 8–24 (QLDDGETTAESPPDDQA). Positions 103 to 167 (DSVSRSTHSV…CYTDYVNADQ (65 aa)) constitute a 4Fe-4S Mo/W bis-MGD-type domain. [4Fe-4S] cluster-binding residues include H110, C114, C118, and C153. D249 serves as a coordination point for Mo-bis(molybdopterin guanine dinucleotide).

It belongs to the prokaryotic molybdopterin-containing oxidoreductase family. In terms of assembly, probable multiprotein complex; a catalytic heterodimer of an alpha and beta chain is proposed to associate with additional subunits involved in membrane attachment and electron transfer. [4Fe-4S] cluster serves as cofactor. Requires Mo-bis(molybdopterin guanine dinucleotide) as cofactor. Post-translationally, exported by the Tat system.

The protein resides in the cell membrane. It carries out the reaction nitrate + a quinol = a quinone + nitrite + H2O. With respect to regulation, inhibited by cyanide, azide and antimycin A. Enzyme stability is not dependent on salt concentration. The respiratory membrane-bound nitrate reductase enzyme complex plays a role in generation of metabolic energy by using nitrate as a terminal electron acceptor during anaerobic conditions. The alpha chain is the actual site of nitrate reduction. This chain is Respiratory nitrate reductase subunit alpha (narG), found in Haloferax mediterranei (strain ATCC 33500 / DSM 1411 / JCM 8866 / NBRC 14739 / NCIMB 2177 / R-4) (Halobacterium mediterranei).